Here is a 208-residue protein sequence, read N- to C-terminus: Uracil phosphoribosyltransferase (208 aa).

Residues Arg-78, Arg-103, and 130 to 138 (DPMFATGGT) each bind 5-phospho-alpha-D-ribose 1-diphosphate. Residues Ile-193 and 198-200 (GDA) each bind uracil. A 5-phospho-alpha-D-ribose 1-diphosphate-binding site is contributed by Asp-199.

Belongs to the UPRTase family. Mg(2+) is required as a cofactor.

The enzyme catalyses UMP + diphosphate = 5-phospho-alpha-D-ribose 1-diphosphate + uracil. It functions in the pathway pyrimidine metabolism; UMP biosynthesis via salvage pathway; UMP from uracil: step 1/1. With respect to regulation, allosterically activated by GTP. Catalyzes the conversion of uracil and 5-phospho-alpha-D-ribose 1-diphosphate (PRPP) to UMP and diphosphate. The chain is Uracil phosphoribosyltransferase from Campylobacter concisus (strain 13826).